A 432-amino-acid chain; its full sequence is Histidinol dehydrogenase (432 aa).

The NAD(+) site is built by tyrosine 133, glutamine 194, and asparagine 217. Substrate is bound by residues serine 240, glutamine 262, and histidine 265. Residues glutamine 262 and histidine 265 each coordinate Zn(2+). Residues glutamate 330 and histidine 331 each act as proton acceptor in the active site. Substrate contacts are provided by histidine 331, aspartate 364, glutamate 418, and histidine 423. Aspartate 364 serves as a coordination point for Zn(2+). Residue histidine 423 coordinates Zn(2+).

The protein belongs to the histidinol dehydrogenase family. Zn(2+) serves as cofactor.

The catalysed reaction is L-histidinol + 2 NAD(+) + H2O = L-histidine + 2 NADH + 3 H(+). It participates in amino-acid biosynthesis; L-histidine biosynthesis; L-histidine from 5-phospho-alpha-D-ribose 1-diphosphate: step 9/9. Functionally, catalyzes the sequential NAD-dependent oxidations of L-histidinol to L-histidinaldehyde and then to L-histidine. In Nitrosomonas europaea (strain ATCC 19718 / CIP 103999 / KCTC 2705 / NBRC 14298), this protein is Histidinol dehydrogenase.